The following is a 65-amino-acid chain: Large ribosomal subunit protein bL35 (65 aa).

Basic residues-rich tracts occupy residues 1 to 11 and 21 to 43; these read MPKIKTRRSAA and KFKR…RKMR. Residues 1–65 are disordered; the sequence is MPKIKTRRSA…KAVRRMLPNG (65 aa).

The protein belongs to the bacterial ribosomal protein bL35 family.

This Desulfovibrio desulfuricans (strain ATCC 27774 / DSM 6949 / MB) protein is Large ribosomal subunit protein bL35.